Consider the following 900-residue polypeptide: Alanine--tRNA ligase (900 aa).

Residues H568, H572, C672, and H676 each contribute to the Zn(2+) site.

Belongs to the class-II aminoacyl-tRNA synthetase family. The cofactor is Zn(2+).

The protein resides in the cytoplasm. It catalyses the reaction tRNA(Ala) + L-alanine + ATP = L-alanyl-tRNA(Ala) + AMP + diphosphate. Functionally, catalyzes the attachment of alanine to tRNA(Ala) in a two-step reaction: alanine is first activated by ATP to form Ala-AMP and then transferred to the acceptor end of tRNA(Ala). Also edits incorrectly charged Ser-tRNA(Ala) and Gly-tRNA(Ala) via its editing domain. In Mycoplasma genitalium (strain ATCC 33530 / DSM 19775 / NCTC 10195 / G37) (Mycoplasmoides genitalium), this protein is Alanine--tRNA ligase.